The chain runs to 340 residues: Cytoskeleton protein RodZ (340 aa).

The Cytoplasmic segment spans residues 1–111 (MNTEATQEKS…LGKQRKKRDG (111 aa)). Positions 19–79 (LRTAREQMGL…RLVHVPEEEL (61 aa)) constitute an HTH cro/C1-type domain. A DNA-binding region (H-T-H motif) is located at residues 30–49 (QQNVAERLCLKLSTIRDIEE). A helical; Signal-anchor for type II membrane protein membrane pass occupies residues 112-132 (WLMIFTWLVLFVVLGLTGAWW). Residues 133–340 (WQNHKAAQDD…QVARLTVGAP (208 aa)) lie on the Periplasmic side of the membrane. A disordered region spans residues 162–252 (ALSDDNANGG…AAPLPTGSAA (91 aa)). The segment covering 183-201 (ATANNAPSSVTATSDNGTP) has biased composition (polar residues). Residues 202 to 233 (AATAQSSQVTASNAAPAANAVNDNTPPVAVAP) are compositionally biased toward low complexity.

It belongs to the RodZ family.

The protein localises to the cell inner membrane. Cytoskeletal protein that is involved in cell-shape control through regulation of the length of the long axis. In Erwinia tasmaniensis (strain DSM 17950 / CFBP 7177 / CIP 109463 / NCPPB 4357 / Et1/99), this protein is Cytoskeleton protein RodZ.